The chain runs to 162 residues: NADH-quinone oxidoreductase subunit I (162 aa).

4Fe-4S ferredoxin-type domains are found at residues 54-83 and 93-122; these read RRYE…IESE and TRYD…ETQI. Positions 63, 66, 69, 73, 102, 105, 108, and 112 each coordinate [4Fe-4S] cluster.

Belongs to the complex I 23 kDa subunit family. As to quaternary structure, NDH-1 is composed of 14 different subunits. Subunits NuoA, H, J, K, L, M, N constitute the membrane sector of the complex. It depends on [4Fe-4S] cluster as a cofactor.

Its subcellular location is the cell inner membrane. It catalyses the reaction a quinone + NADH + 5 H(+)(in) = a quinol + NAD(+) + 4 H(+)(out). NDH-1 shuttles electrons from NADH, via FMN and iron-sulfur (Fe-S) centers, to quinones in the respiratory chain. The immediate electron acceptor for the enzyme in this species is believed to be ubiquinone. Couples the redox reaction to proton translocation (for every two electrons transferred, four hydrogen ions are translocated across the cytoplasmic membrane), and thus conserves the redox energy in a proton gradient. The protein is NADH-quinone oxidoreductase subunit I of Burkholderia thailandensis (strain ATCC 700388 / DSM 13276 / CCUG 48851 / CIP 106301 / E264).